The primary structure comprises 673 residues: uncharacterized protein (673 aa).

A signal peptide spans 1 to 24; it reads MKIHNIIKIIIVVCLEGFALTSFA. The next 6 helical transmembrane spans lie at 224–244, 253–273, 410–430, 436–456, 469–489, and 562–582; these read NAIG…MVLN, IALF…LGPL, IILI…LYFI, CMIT…MMLF, VSLS…LLIT, and VVSI…FYYF. Positions 624-673 are disordered; that stretch reads AQATQGKPPSSGDMPGDGGSKRSEGQKGDDSFISSGGNSSGDSLSSSGGK. Residues 642 to 653 are compositionally biased toward basic and acidic residues; that stretch reads GSKRSEGQKGDD. Low complexity predominate over residues 654–673; the sequence is SFISSGGNSSGDSLSSSGGK.

This sequence belongs to the TrbL/VirB6 family.

It is found in the cell membrane. This is an uncharacterized protein from Rickettsia bellii (strain RML369-C).